The sequence spans 59 residues: Cecropin-A1 (59 aa).

The signal sequence occupies residues 1 to 23; that stretch reads MNFTKLFAIVLLAALVLLGQTEA.

Belongs to the cecropin family.

It localises to the secreted. Functionally, cecropins have lytic and antibacterial activity against several Gram-positive and Gram-negative bacteria. The protein is Cecropin-A1 (CECA1) of Aedes albopictus (Asian tiger mosquito).